The sequence spans 126 residues: MAYPADFKYTKEHEWISADGKIGITDHAQSSLGDIVFVELPKVGATITKGQSFGSVESVKAVSDLFAPVSGKVTAVNEELATTPEKVNTDAHAAWMVKVELTNPSELNDLLSAADYEKFAAEEAGH.

The 82-residue stretch at 19-100 (DGKIGITDHA…AHAAWMVKVE (82 aa)) folds into the Lipoyl-binding domain. Residue K60 is modified to N6-lipoyllysine.

The protein belongs to the GcvH family. The glycine cleavage system is composed of four proteins: P, T, L and H. Requires (R)-lipoate as cofactor.

Its function is as follows. The glycine cleavage system catalyzes the degradation of glycine. The H protein shuttles the methylamine group of glycine from the P protein to the T protein. This chain is Glycine cleavage system H protein, found in Koribacter versatilis (strain Ellin345).